A 474-amino-acid chain; its full sequence is Selection and upkeep of intraepithelial T-cells protein 4 (474 aa).

The N-terminal stretch at 1-25 (MGATEVLTSYCVVLCLLQMVALSSG) is a signal peptide. Topologically, residues 26–241 (HFTVIGSQRP…VLSGELFSWK (216 aa)) are extracellular. The 114-residue stretch at 27–140 (FTVIGSQRPI…EEHITEVKVT (114 aa)) folds into the Ig-like V-type domain. 2 disulfides stabilise this stretch: C48–C122 and C162–C216. Residues N111 and N199 are each glycosylated (N-linked (GlcNAc...) asparagine). The Ig-like C1-type domain maps to 141-234 (ATSSDIQILM…QEQSINIVLS (94 aa)). A helical membrane pass occupies residues 242 to 262 (IVWIMILSTISFVMIDFCMTY). The Cytoplasmic portion of the chain corresponds to 263–298 (CVQQQLIHEESLSTVDNDQCESDQSEGTCYKRNYPW). A helical transmembrane segment spans residues 299 to 319 (IIIAVVPIISVFAIIGVMLFL). The Extracellular portion of the chain corresponds to 320 to 341 (HLEQRVTILEQHFELDTLWLED). A helical transmembrane segment spans residues 342-362 (ISVILCVVIVSNINLIPLIYF). Over 363-381 (RLHEHVPRFKDRSPILNKA) the chain is Cytoplasmic. A helical transmembrane segment spans residues 382–402 (VVFLHFIYFSIVCGTILLVHL). The Extracellular portion of the chain corresponds to 403–420 (QLRNKVSISDSLFSLYNS). Residues 421 to 441 (WLTDISMILGFLLSIFIVTTI) form a helical membrane-spanning segment. The Cytoplasmic portion of the chain corresponds to 442-474 (AKSSLFNKKWCIGLCIHMKEAEATGGPCEGEEL).

It belongs to the SKINT family. As to expression, expressed in skin, thymus and, to a lower extent, bladder and testis.

It is found in the membrane. In terms of biological role, may act by engaging a cell surface molecule on immature T-cells in the embryonic thymus. The protein is Selection and upkeep of intraepithelial T-cells protein 4 (Skint4) of Mus musculus (Mouse).